A 179-amino-acid polypeptide reads, in one-letter code: Large ribosomal subunit protein uL5 (179 aa).

The protein belongs to the universal ribosomal protein uL5 family. As to quaternary structure, part of the 50S ribosomal subunit; part of the 5S rRNA/L5/L18/L25 subcomplex. Contacts the 5S rRNA and the P site tRNA. Forms a bridge to the 30S subunit in the 70S ribosome.

This is one of the proteins that bind and probably mediate the attachment of the 5S RNA into the large ribosomal subunit, where it forms part of the central protuberance. In the 70S ribosome it contacts protein S13 of the 30S subunit (bridge B1b), connecting the 2 subunits; this bridge is implicated in subunit movement. Contacts the P site tRNA; the 5S rRNA and some of its associated proteins might help stabilize positioning of ribosome-bound tRNAs. The protein is Large ribosomal subunit protein uL5 of Dechloromonas aromatica (strain RCB).